A 341-amino-acid polypeptide reads, in one-letter code: N-acetyl-gamma-glutamyl-phosphate reductase (341 aa).

C148 is an active-site residue.

The protein belongs to the NAGSA dehydrogenase family. Type 1 subfamily.

Its subcellular location is the cytoplasm. The enzyme catalyses N-acetyl-L-glutamate 5-semialdehyde + phosphate + NADP(+) = N-acetyl-L-glutamyl 5-phosphate + NADPH + H(+). The protein operates within amino-acid biosynthesis; L-arginine biosynthesis; N(2)-acetyl-L-ornithine from L-glutamate: step 3/4. Catalyzes the NADPH-dependent reduction of N-acetyl-5-glutamyl phosphate to yield N-acetyl-L-glutamate 5-semialdehyde. The protein is N-acetyl-gamma-glutamyl-phosphate reductase of Pseudothermotoga lettingae (strain ATCC BAA-301 / DSM 14385 / NBRC 107922 / TMO) (Thermotoga lettingae).